The chain runs to 306 residues: Pre-mRNA-splicing factor cwf26 (306 aa).

A disordered region spans residues 130–152; the sequence is KAEERRKREEKSSNLDEEELRKS. Positions 130-198 form a coiled coil; the sequence is KAEERRKREE…KEQQQGVVQV (69 aa).

This sequence belongs to the CWC26 family. In terms of assembly, belongs to the 40S cdc5-associated complex (or cwf complex), a spliceosome sub-complex reminiscent of a late-stage spliceosome composed of the U2, U5 and U6 snRNAs and at least brr2, cdc5, cwf2/prp3, cwf3/syf1, cwf4/syf3, cwf5/ecm2, spp42/cwf6, cwf7/spf27, cwf8, cwf9, cwf10, cwf11, cwf12, prp45/cwf13, cwf14, cwf15, cwf16, cwf17, cwf18, cwf19, cwf20, cwf21, cwf22, cwf23, cwf24, cwf25, cwf26, cyp7/cwf27, cwf28, cwf29/ist3, lea1, msl1, prp5/cwf1, prp10, prp12/sap130, prp17, prp22, sap61, sap62, sap114, sap145, slu7, smb1, smd1, smd3, smf1, smg1 and syf2.

It is found in the cytoplasm. The protein resides in the nucleus. Its function is as follows. Involved in mRNA splicing. This Schizosaccharomyces pombe (strain 972 / ATCC 24843) (Fission yeast) protein is Pre-mRNA-splicing factor cwf26 (cwf26).